Here is a 255-residue protein sequence, read N- to C-terminus: uncharacterized protein (255 aa).

The signal sequence occupies residues 1–23 (MKRLNKLVLYISFLILVISFTAG). A lipid anchor (N-palmitoyl cysteine) is attached at C24. C24 is lipidated: S-diacylglycerol cysteine.

This sequence belongs to the staphylococcal tandem lipoprotein family.

Its subcellular location is the cell membrane. This is an uncharacterized protein from Staphylococcus aureus (strain N315).